Consider the following 275-residue polypeptide: Large ribosomal subunit protein uL2 (275 aa).

The segment at 223–275 (VVMNPVDHPHGGGEGKSSGGRHPVSPWGMPTKGYKTRKNKGTDQYIVRRRNKK) is disordered.

This sequence belongs to the universal ribosomal protein uL2 family. Part of the 50S ribosomal subunit. Forms a bridge to the 30S subunit in the 70S ribosome.

Its function is as follows. One of the primary rRNA binding proteins. Required for association of the 30S and 50S subunits to form the 70S ribosome, for tRNA binding and peptide bond formation. It has been suggested to have peptidyltransferase activity; this is somewhat controversial. Makes several contacts with the 16S rRNA in the 70S ribosome. The chain is Large ribosomal subunit protein uL2 from Psychromonas ingrahamii (strain DSM 17664 / CCUG 51855 / 37).